Here is a 71-residue protein sequence, read N- to C-terminus: Small ribosomal subunit protein bS21 (71 aa).

Residues 37–71 (HYEKPTQERKRKAAAAVKRHMKRLSREQARRRRLY) form a disordered region. The span at 45–71 (RKRKAAAAVKRHMKRLSREQARRRRLY) shows a compositional bias: basic residues.

It belongs to the bacterial ribosomal protein bS21 family.

In Alkalilimnicola ehrlichii (strain ATCC BAA-1101 / DSM 17681 / MLHE-1), this protein is Small ribosomal subunit protein bS21.